Reading from the N-terminus, the 366-residue chain is tRNA-specific 2-thiouridylase MnmA (366 aa).

ATP contacts are provided by residues G12 to S19 and M38. Residues N98 to D100 form an interaction with target base in tRNA region. C103 functions as the Nucleophile in the catalytic mechanism. Residues C103 and C200 are joined by a disulfide bond. G128 is an ATP binding site. The tract at residues K150–Q152 is interaction with tRNA. C200 serves as the catalytic Cysteine persulfide intermediate. Residues R312 to Y313 are interaction with tRNA.

Belongs to the MnmA/TRMU family.

The protein localises to the cytoplasm. It catalyses the reaction S-sulfanyl-L-cysteinyl-[protein] + uridine(34) in tRNA + AH2 + ATP = 2-thiouridine(34) in tRNA + L-cysteinyl-[protein] + A + AMP + diphosphate + H(+). Functionally, catalyzes the 2-thiolation of uridine at the wobble position (U34) of tRNA, leading to the formation of s(2)U34. This chain is tRNA-specific 2-thiouridylase MnmA, found in Pseudoalteromonas translucida (strain TAC 125).